The primary structure comprises 186 residues: MTNNLIACLIINNLTLIHFVGFEDIKIKNNIMLIKRYAIITITSLLIYSISFYLYKLFAKNNLLFLVPIFYVILIYVLILLFKVLNDLFIVYNKKSNYSNDFMLSNSSLIAITFFALDKNNGFFEGLEILILSALGILIALMSITSIKKNFDKNPKINILENEPIYFFIIFILSLIPNIIILIYNQ.

A run of 4 helical transmembrane segments spans residues 5-25 (LIAC…FEDI), 39-59 (IITI…KLFA), 62-82 (NLLF…ILLF), and 122-142 (GFFE…IALM).

The protein localises to the cell membrane. This is an uncharacterized protein from Borreliella burgdorferi (strain ATCC 35210 / DSM 4680 / CIP 102532 / B31) (Borrelia burgdorferi).